Consider the following 219-residue polypeptide: Small ribosomal subunit protein uS3 (219 aa).

In terms of domain architecture, KH type-2 spans 38–106; that stretch reads IREYINVRLK…RVHINILEVK (69 aa).

It belongs to the universal ribosomal protein uS3 family. In terms of assembly, part of the 30S ribosomal subunit. Forms a tight complex with proteins S10 and S14.

Binds the lower part of the 30S subunit head. Binds mRNA in the 70S ribosome, positioning it for translation. The chain is Small ribosomal subunit protein uS3 from Bacillus thuringiensis (strain Al Hakam).